The following is a 411-amino-acid chain: D-galactonate dehydratase family member SBI_01856 (411 aa).

2 residues coordinate substrate: asparagine 45 and histidine 130. The active-site Proton donor/acceptor is tyrosine 167. Aspartate 219 is a Mg(2+) binding site. Histidine 221 serves as the catalytic Proton donor/acceptor. Mg(2+)-binding residues include glutamate 245 and glutamate 271. Residues glutamate 271, arginine 292, histidine 321, aspartate 325, and glutamate 348 each coordinate substrate.

The protein belongs to the mandelate racemase/muconate lactonizing enzyme family. GalD subfamily. Requires Mg(2+) as cofactor.

It catalyses the reaction D-gluconate = 2-dehydro-3-deoxy-D-gluconate + H2O. Functionally, has low D-gluconate dehydratase activity (in vitro), suggesting that it has no significant role in D-gluconate degradation in vivo. Has no detectable activity with a panel of 70 other acid sugars (in vitro). This chain is D-galactonate dehydratase family member SBI_01856, found in Streptomyces bingchenggensis (strain BCW-1).